Reading from the N-terminus, the 148-residue chain is 3-dehydroquinate dehydratase 2 (148 aa).

Y24 serves as the catalytic Proton acceptor. Positions 75, 81, and 88 each coordinate substrate. The Proton donor role is filled by H101. Residues 102 to 103 (LS) and R112 contribute to the substrate site.

The protein belongs to the type-II 3-dehydroquinase family. Homododecamer.

The enzyme catalyses 3-dehydroquinate = 3-dehydroshikimate + H2O. It functions in the pathway metabolic intermediate biosynthesis; chorismate biosynthesis; chorismate from D-erythrose 4-phosphate and phosphoenolpyruvate: step 3/7. In terms of biological role, catalyzes a trans-dehydration via an enolate intermediate. The chain is 3-dehydroquinate dehydratase 2 (aroQ2) from Pseudomonas aeruginosa (strain ATCC 15692 / DSM 22644 / CIP 104116 / JCM 14847 / LMG 12228 / 1C / PRS 101 / PAO1).